A 278-amino-acid chain; its full sequence is NADPH-dependent 7-cyano-7-deazaguanine reductase (278 aa).

87–89 serves as a coordination point for substrate; sequence IES. 89–90 lines the NADPH pocket; that stretch reads SK. Cys185 acts as the Thioimide intermediate in catalysis. Catalysis depends on Asp192, which acts as the Proton donor. Residue 224–225 participates in substrate binding; that stretch reads HE. Residue 253–254 coordinates NADPH; the sequence is RG. A disordered region spans residues 255-278; sequence GLDINPYRSTNPTFSVQNHRSFRQ. Residues 261 to 278 are compositionally biased toward polar residues; it reads YRSTNPTFSVQNHRSFRQ.

The protein belongs to the GTP cyclohydrolase I family. QueF type 2 subfamily. As to quaternary structure, homodimer.

The protein resides in the cytoplasm. It carries out the reaction 7-aminomethyl-7-carbaguanine + 2 NADP(+) = 7-cyano-7-deazaguanine + 2 NADPH + 3 H(+). Its pathway is tRNA modification; tRNA-queuosine biosynthesis. In terms of biological role, catalyzes the NADPH-dependent reduction of 7-cyano-7-deazaguanine (preQ0) to 7-aminomethyl-7-deazaguanine (preQ1). The polypeptide is NADPH-dependent 7-cyano-7-deazaguanine reductase (Coxiella burnetii (strain CbuK_Q154) (Coxiella burnetii (strain Q154))).